We begin with the raw amino-acid sequence, 98 residues long: Protein S100-A13 (98 aa).

The EF-hand domain maps to 18–53; that stretch reads STFFTFAGREGRKGSLNINEFKELATQQLPHLLKDV. Ca(2+) contacts are provided by serine 32, glutamate 37, aspartate 64, asparagine 66, aspartate 68, glutamate 70, and glutamate 75. Serine 32 carries the post-translational modification Phosphoserine.

Belongs to the S-100 family. Homodimer. Part of a copper-dependent multiprotein complex containing S100A13, FGF1 and SYT1. Interacts with FGF1 and SYT1. Interacts with IL1A.

Its subcellular location is the cytoplasm. The protein localises to the secreted. Plays a role in the export of proteins that lack a signal peptide and are secreted by an alternative pathway. Binds two calcium ions per subunit. Binds one copper ion. Binding of one copper ion does not interfere with calcium binding. Required for the copper-dependent stress-induced export of IL1A and FGF1. The calcium-free protein binds to lipid vesicles containing phosphatidylserine, but not to vesicles containing phosphatidylcholine. The sequence is that of Protein S100-A13 (S100a13) from Mus musculus (Mouse).